We begin with the raw amino-acid sequence, 406 residues long: L-carnitine CoA-transferase (406 aa).

Lys98 and Arg105 together coordinate CoA. Asp170 (nucleophile) is an active-site residue.

This sequence belongs to the CoA-transferase III family. CaiB subfamily. As to quaternary structure, homodimer.

It is found in the cytoplasm. The enzyme catalyses crotonobetainyl-CoA + (R)-carnitine = crotonobetaine + (R)-carnitinyl-CoA. It catalyses the reaction 4-(trimethylamino)butanoyl-CoA + (R)-carnitine = (R)-carnitinyl-CoA + 4-(trimethylamino)butanoate. The protein operates within amine and polyamine metabolism; carnitine metabolism. Functionally, catalyzes the reversible transfer of the CoA moiety from gamma-butyrobetainyl-CoA to L-carnitine to generate L-carnitinyl-CoA and gamma-butyrobetaine. Is also able to catalyze the reversible transfer of the CoA moiety from gamma-butyrobetainyl-CoA or L-carnitinyl-CoA to crotonobetaine to generate crotonobetainyl-CoA. In Proteus mirabilis (strain HI4320), this protein is L-carnitine CoA-transferase.